The sequence spans 215 residues: Formate dehydrogenase subunit beta (215 aa).

The 4Fe-4S ferredoxin-type 1 domain occupies 3–32 (KGFFVDTTRCTACRGCQVACKQWHGNPATP). C12, C15, C18, C22, C73, C76, C81, C121, C138, C141, C153, and C157 together coordinate [4Fe-4S] cluster. Positions 129–168 (VAESNQMAKCDMCIDRITNGLRPACVTSCPTGAMNFGDLS) constitute a 4Fe-4S ferredoxin-type 2 domain.

In terms of assembly, heterodimer of alpha (FdhA) and beta (FdhB) subunits. The cofactor is [4Fe-4S] cluster.

It is found in the periplasm. In terms of biological role, beta chain of the formate dehydrogenase (FDH) catalyzes the reversible two-electron oxidation of formate to carbon dioxide. FDH loses activity in the presence of air, but this activity can be restored. This chain is an electron transfer unit. This Megalodesulfovibrio gigas (strain ATCC 19364 / DSM 1382 / NCIMB 9332 / VKM B-1759) (Desulfovibrio gigas) protein is Formate dehydrogenase subunit beta.